Here is a 293-residue protein sequence, read N- to C-terminus: MPELPEVETVRRGLLPVLQGAVIESAEARRPDLRWPLPEGFAERLTGRRVEAVGRRAKYLLADLDGGEVLIVHLGMSGSIRIEGAQVKGRPAGFYHPRGEPGTHDHVVFHLAGGATVTFNDPRRFGAMLLVPYDQLDSHPLLSSLGPEPLGNTFHADYLAQACAGRRTNLKAALLDQKVVAGLGNIYVSEALHRAGLSPRRMASTLASASGAPNVRTERLVTAIRDVLREAIQAGGSSLKDHRQVNGELGYFQHNFKVYDREGEPCPTLRCKGHVQRIVQAGRSTFFCATCQR.

Proline 2 acts as the Schiff-base intermediate with DNA in catalysis. The active-site Proton donor is glutamate 3. Residue lysine 58 is the Proton donor; for beta-elimination activity of the active site. The DNA site is built by histidine 104, arginine 123, and arginine 166. The segment at 257–293 (KVYDREGEPCPTLRCKGHVQRIVQAGRSTFFCATCQR) adopts an FPG-type zinc-finger fold. The active-site Proton donor; for delta-elimination activity is the arginine 283.

It belongs to the FPG family. As to quaternary structure, monomer. Zn(2+) is required as a cofactor.

The enzyme catalyses Hydrolysis of DNA containing ring-opened 7-methylguanine residues, releasing 2,6-diamino-4-hydroxy-5-(N-methyl)formamidopyrimidine.. The catalysed reaction is 2'-deoxyribonucleotide-(2'-deoxyribose 5'-phosphate)-2'-deoxyribonucleotide-DNA = a 3'-end 2'-deoxyribonucleotide-(2,3-dehydro-2,3-deoxyribose 5'-phosphate)-DNA + a 5'-end 5'-phospho-2'-deoxyribonucleoside-DNA + H(+). Involved in base excision repair of DNA damaged by oxidation or by mutagenic agents. Acts as a DNA glycosylase that recognizes and removes damaged bases. Has a preference for oxidized purines, such as 7,8-dihydro-8-oxoguanine (8-oxoG). Has AP (apurinic/apyrimidinic) lyase activity and introduces nicks in the DNA strand. Cleaves the DNA backbone by beta-delta elimination to generate a single-strand break at the site of the removed base with both 3'- and 5'-phosphates. This chain is Formamidopyrimidine-DNA glycosylase, found in Azorhizobium caulinodans (strain ATCC 43989 / DSM 5975 / JCM 20966 / LMG 6465 / NBRC 14845 / NCIMB 13405 / ORS 571).